Reading from the N-terminus, the 236-residue chain is 2-C-methyl-D-erythritol 4-phosphate cytidylyltransferase (236 aa).

Belongs to the IspD/TarI cytidylyltransferase family. IspD subfamily.

The catalysed reaction is 2-C-methyl-D-erythritol 4-phosphate + CTP + H(+) = 4-CDP-2-C-methyl-D-erythritol + diphosphate. Its pathway is isoprenoid biosynthesis; isopentenyl diphosphate biosynthesis via DXP pathway; isopentenyl diphosphate from 1-deoxy-D-xylulose 5-phosphate: step 2/6. Its function is as follows. Catalyzes the formation of 4-diphosphocytidyl-2-C-methyl-D-erythritol from CTP and 2-C-methyl-D-erythritol 4-phosphate (MEP). In Burkholderia vietnamiensis (strain G4 / LMG 22486) (Burkholderia cepacia (strain R1808)), this protein is 2-C-methyl-D-erythritol 4-phosphate cytidylyltransferase.